A 77-amino-acid polypeptide reads, in one-letter code: Acyl carrier protein (77 aa).

The 76-residue stretch at 2–77 (SNIEERVKKI…AAIDYVTANQ (76 aa)) folds into the Carrier domain. The residue at position 37 (Ser37) is an O-(pantetheine 4'-phosphoryl)serine.

It belongs to the acyl carrier protein (ACP) family. 4'-phosphopantetheine is transferred from CoA to a specific serine of apo-ACP by AcpS. This modification is essential for activity because fatty acids are bound in thioester linkage to the sulfhydryl of the prosthetic group.

It is found in the cytoplasm. It participates in lipid metabolism; fatty acid biosynthesis. Functionally, carrier of the growing fatty acid chain in fatty acid biosynthesis. The chain is Acyl carrier protein from Colwellia psychrerythraea (strain 34H / ATCC BAA-681) (Vibrio psychroerythus).